The chain runs to 613 residues: Kelch-like protein 36 (613 aa).

Positions 45 to 112 (CDVVLVVEEQ…LYSSELELDG (68 aa)) constitute a BTB domain. One can recognise a BACK domain in the interval 147–249 (YLYLQELASI…PEDILLQRVK (103 aa)). Kelch repeat units lie at residues 294–343 (CLLF…VLGG), 344–395 (FIFI…SIED), 396–442 (MLVA…IYKD), 444–491 (VYIS…SLGD), 492–544 (SIYS…VWQG), and 545–593 (RIYI…VCAL).

As to quaternary structure, interacts with CUL3.

It functions in the pathway protein modification; protein ubiquitination. Probable substrate-specific adapter of an E3 ubiquitin-protein ligase complex which mediates the ubiquitination and subsequent proteasomal degradation of target proteins. In Mus musculus (Mouse), this protein is Kelch-like protein 36 (Klhl36).